A 141-amino-acid polypeptide reads, in one-letter code: Nucleoside diphosphate kinase (141 aa).

The ATP site is built by Lys-11, Phe-59, Arg-87, Thr-93, Arg-104, and Asn-114. Catalysis depends on His-117, which acts as the Pros-phosphohistidine intermediate.

This sequence belongs to the NDK family. As to quaternary structure, homotetramer. The cofactor is Mg(2+).

Its subcellular location is the cytoplasm. It carries out the reaction a 2'-deoxyribonucleoside 5'-diphosphate + ATP = a 2'-deoxyribonucleoside 5'-triphosphate + ADP. The enzyme catalyses a ribonucleoside 5'-diphosphate + ATP = a ribonucleoside 5'-triphosphate + ADP. Major role in the synthesis of nucleoside triphosphates other than ATP. The ATP gamma phosphate is transferred to the NDP beta phosphate via a ping-pong mechanism, using a phosphorylated active-site intermediate. This Polynucleobacter necessarius subsp. necessarius (strain STIR1) protein is Nucleoside diphosphate kinase.